Reading from the N-terminus, the 633-residue chain is Kinesin-like motor protein 9 (633 aa).

A Kinesin motor domain is found at 1 to 392 (MIQIFLRVKK…MRYSANAREI (392 aa)). 94-101 (GVSGAGKT) contacts ATP. Disordered stretches follow at residues 393-423 (LPPPLNENSGSQSPSHSLLQKSKNTSSTKAL), 531-556 (LEEESIKESSATQQNENQHKRSSRKL), and 575-633 (KLWP…INEL). The span at 398 to 423 (NENSGSQSPSHSLLQKSKNTSSTKAL) shows a compositional bias: polar residues. The stretch at 417-541 (TSSTKALTSH…EEESIKESSA (125 aa)) forms a coiled coil. A compositionally biased stretch (polar residues) spans 578–587 (PQSTLIQAPN). The segment covering 604 to 623 (VSPIKPLSPSRRPPLTSLYS) has biased composition (low complexity). A phosphoserine mark is found at S605, S611, and S613. A compositionally biased stretch (polar residues) spans 624–633 (GTTDIDINEL).

It belongs to the TRAFAC class myosin-kinesin ATPase superfamily. Kinesin family. Interacts with ase1. Phosphorylated by cdc2 and dephosphorylated by clp1. Dephosphorylation is required for the interaction with ase1.

It is found in the nucleus. The protein resides in the cytoplasm. The protein localises to the cytoskeleton. Its subcellular location is the microtubule organizing center. It localises to the spindle pole body. Functionally, kinesin-like motor protein involved in anaphase B spindle elongation. The chain is Kinesin-like motor protein 9 (klp9) from Schizosaccharomyces pombe (strain 972 / ATCC 24843) (Fission yeast).